The chain runs to 225 residues: Ribose-5-phosphate isomerase A (225 aa).

Substrate-binding positions include 27–30 (SGST), 82–85 (DGAD), and 95–98 (KGGG). Glu104 acts as the Proton acceptor in catalysis. Residue Lys122 coordinates substrate.

Belongs to the ribose 5-phosphate isomerase family. As to quaternary structure, homodimer.

The catalysed reaction is aldehydo-D-ribose 5-phosphate = D-ribulose 5-phosphate. It participates in carbohydrate degradation; pentose phosphate pathway; D-ribose 5-phosphate from D-ribulose 5-phosphate (non-oxidative stage): step 1/1. Its function is as follows. Catalyzes the reversible conversion of ribose-5-phosphate to ribulose 5-phosphate. The chain is Ribose-5-phosphate isomerase A from Archaeoglobus fulgidus (strain ATCC 49558 / DSM 4304 / JCM 9628 / NBRC 100126 / VC-16).